The sequence spans 543 residues: Nucleoside-triphosphatase ntp-1 (543 aa).

The chain crosses the membrane as a helical span at residues 40 to 60 (VYGFLLTCTCLLLILTIIPMS). Glutamate 212 serves as the catalytic Proton acceptor. The chain crosses the membrane as a helical span at residues 497 to 517 (QISNFFSFFVILIIVLAVALY).

It belongs to the GDA1/CD39 NTPase family.

The protein localises to the golgi apparatus membrane. The enzyme catalyses a ribonucleoside 5'-triphosphate + H2O = a ribonucleoside 5'-diphosphate + phosphate + H(+). Functionally, seems to be able to hydrolyze CTP, ATP and UTP. The chain is Nucleoside-triphosphatase ntp-1 from Caenorhabditis elegans.